Here is a 148-residue protein sequence, read N- to C-terminus: Calcium-regulated heat stable protein 1 (148 aa).

Over residues 1-12 (MSSEPPPPPLQP) the composition is skewed to pro residues. The segment at 1-47 (MSSEPPPPPLQPPTHQTSVGLLDTPRTRDRSPSPLRGNVVPSPLPTR) is disordered. An N-acetylserine modification is found at Ser2. Ser31, Ser33, and Ser42 each carry phosphoserine. Thr46 bears the Phosphothreonine mark. 2 positions are modified to phosphoserine: Ser53 and Ser59. Residues 63–130 (VYKGVCKCFC…KLQAVEVVIT (68 aa)) form the CSD domain. Residue Ser147 is modified to Phosphoserine.

As to quaternary structure, homodimer. Interacts with STYX. In terms of processing, can be phosphorylated by DYRK2 (in vitro). Dephosphorylated by calcineurin in a Ca(2+) dependent manner.

The protein localises to the cytoplasm. It localises to the P-body. It is found in the cytoplasmic granule. Functionally, binds mRNA and regulates the stability of target mRNA. This is Calcium-regulated heat stable protein 1 (Carhsp1) from Mus musculus (Mouse).